Reading from the N-terminus, the 359-residue chain is Type-1 angiotensin II receptor A (359 aa).

Residues methionine 1–serine 25 lie on the Extracellular side of the membrane. Asparagine 4 carries an N-linked (GlcNAc...) asparagine glycan. Glutamine 15 and aspartate 17 together coordinate angiotensin II. 2 disulfide bridges follow: cysteine 18–cysteine 274 and cysteine 101–cysteine 180. The helical transmembrane segment at tyrosine 26 to phenylalanine 55 threads the bilayer. Residues tyrosine 56–threonine 61 are Cytoplasmic-facing. Residues valine 62–alanine 89 form a helical membrane-spanning segment. The Extracellular segment spans residues methionine 90–asparagine 98. Residues histidine 99–aspartate 125 traverse the membrane as a helical segment. Over arginine 126 to threonine 141 the chain is Cytoplasmic. Residues methionine 142–isoleucine 165 traverse the membrane as a helical segment. Over histidine 166–threonine 190 the chain is Extracellular. Arginine 167 contacts angiotensin II. Asparagine 176 carries N-linked (GlcNAc...) asparagine glycosylation. Angiotensin II contacts are provided by phenylalanine 182, histidine 183, and tyrosine 184. A glycan (N-linked (GlcNAc...) asparagine) is linked at asparagine 188. A helical transmembrane segment spans residues leucine 191–threonine 216. Lysine 199 is an angiotensin II binding site. Residues leucine 217–phenylalanine 239 lie on the Cytoplasmic side of the membrane. Residues arginine 240–leucine 268 form a helical membrane-spanning segment. Residues glycine 269–aspartate 278 lie on the Extracellular side of the membrane. Residues isoleucine 279 to phenylalanine 304 form a helical membrane-spanning segment. The Cytoplasmic segment spans residues leucine 305–glutamate 359. Residues leucine 337–alanine 349 show a composition bias toward polar residues. The segment at leucine 337–glutamate 359 is disordered. Cysteine 355 carries the S-palmitoyl cysteine lipid modification.

Belongs to the G-protein coupled receptor 1 family. Interacts with MAS1. Interacts with ARRB1. Interacts with FLNA (via filamin repeat 21); increases PKA-mediated phosphorylation of FLNA. Post-translationally, C-terminal Ser or Thr residues may be phosphorylated. As to expression, is expressed in the liver, kidney, aorta, lung, uterus, ovary, spleen, heart, adrenal gland, and vascular smooth muscle cell.

It localises to the cell membrane. Its function is as follows. Receptor for angiotensin II, a vasoconstricting peptide, which acts as a key regulator of blood pressure and sodium retention by the kidney. The activated receptor in turn couples to G-alpha proteins G(q) (GNAQ, GNA11, GNA14 or GNA15) and thus activates phospholipase C and increases the cytosolic Ca(2+) concentrations, which in turn triggers cellular responses such as stimulation of protein kinase C. This is Type-1 angiotensin II receptor A (Agtr1) from Rattus norvegicus (Rat).